The chain runs to 70 residues: SPbeta prophage-derived uncharacterized protein YotJ (70 aa).

The protein is SPbeta prophage-derived uncharacterized protein YotJ (yotJ) of Bacillus subtilis (strain 168).